The chain runs to 553 residues: MNIIDQVKQTLVEEIAASINKAGLADEIPDIKIEVPKDTKNGDYATNIAMVLTKIAKRNPREIAQAIVDNLDTEKAHVKQIDIAGPGFINFYLDNQYLTAIIPEAIEKGDQFGHVNESKGQNVLLEYVSANPTGDLHIGHARNAAVGDALANILTAAGYNVTREYYINDAGNQITNLARSIETRFFEALGDNSYSMPEDGYNGKDIIEIGKDLAEKHPEIKDYSEEARLKEFRKLGVEYEMAKLKNDLAEFNTHFDNWFSETSLYEKCEILEVLAKMKELGYTYEADGATWLRTTDFKDDKDRVLIKNDGTYTYFLPDIAYHFDKVKRGNDILIDLFGADHHGYINRLKASLETFGVDSNRLEIQIMQMVRLMENGKEVKMSKRTGNAITLREIMDEVGVDAARYFLTMRSPDSHFDFDMELAKEQSQDNPVYYAQYAHARICSILKQAKEQGIEVTAANDFTTITNEKAIELLKKVADFEPTIESAAEHRSAHRITNYIQDLASHFHKFYNAEKVLTDDIEKTKAHVAMIEAVRITLKNALAMVGVSAPESM.

Positions 130–140 match the 'HIGH' region motif; that stretch reads ANPTGDLHIGH.

It belongs to the class-I aminoacyl-tRNA synthetase family. As to quaternary structure, monomer.

It is found in the cytoplasm. It carries out the reaction tRNA(Arg) + L-arginine + ATP = L-arginyl-tRNA(Arg) + AMP + diphosphate. The sequence is that of Arginine--tRNA ligase from Staphylococcus aureus (strain MSSA476).